The chain runs to 241 residues: DNA-binding dual master transcriptional regulator RpaA (241 aa).

One can recognise a Response regulatory domain in the interval 3–119 (RILIIDDDPA…EMLARVRALL (117 aa)). Position 52 is a 4-aspartylphosphate (aspartate 52). Positions 132 to 231 (SEILNQGPLT…VYGAGYCLEL (100 aa)) form a DNA-binding region, ompR/PhoB-type.

Interacts with reduced ferredoxin (petF). Interacts with CikA, RpaB, SasA, Sll0038 (pixG) and a number of other proteins. Post-translationally, phosphorylated by SasA; phosphorylation is maximal when KaiC phosphorylation is active during the circadian cycle. Dephosphorylated by CikA. CikA and SasA cooperation generates RpaA activity oscillation that is distinct from that generated by CikA or SasA alone and offset from the rhythm of KaiC phosphorylation.

The protein localises to the cytoplasm. Functionally, response regulator of 2 two-component regulatory systems SasA/RpaA and CikA/RpaA involved in genome-wide circadian gene expression. The histidine kinases have opposing effects modulated by the clock oscillator proteins; SasA phosphorylates RpaA (stimulated by fully phosphorylated KaiC1) while CikA dephosphorylates phospho-RpaA (stimulated by the phospho-Ser-432-KaiC1-KaiB complex). Its function is as follows. The RpaA regulon is about 300 genes, and includes itself, cikA, sigE, sigG, genes involved in photosynthesis, carbon metabolism in the light and dark, phototaxis, CRISPR arrays 2 and 3 as well as nearly 90 ncRNAs. Genes are up- or down-regulated in its absence. Involved in regulation of primary sugar and amino acid metabolism and in adaptation to light changes. Regulates the accumulation of the monomeric photosystem I and the D1 protein under high light conditions. Overexpression causes cells to grow more slowly, increases levels of transcripts for clock oscillator genes in the light and the dark, increases levels of SigE protein, increases accumulation of sugar catabolic enzymes in the dark with concomitant decreases in most sugar metabolites. Plays a role in cell division; overexpression from the psbAII promoter increases expression of some cell-division-related genes, alters cell volume and changes the outer cell membrane and cell wall appearance. The chain is DNA-binding dual master transcriptional regulator RpaA from Synechocystis sp. (strain ATCC 27184 / PCC 6803 / Kazusa).